A 516-amino-acid chain; its full sequence is Glucose-1-phosphate adenylyltransferase large subunit 1, chloroplastic/amyloplastic (516 aa).

Residues 1 to 45 (MQFALALDTNSGPHQIRSCEGDGIDRLEKLSIGGRKQEKALRNRC) constitute a chloroplast transit peptide.

Belongs to the bacterial/plant glucose-1-phosphate adenylyltransferase family. Heterotetramer. In terms of tissue distribution, endosperm.

The protein resides in the plastid. Its subcellular location is the chloroplast. The protein localises to the amyloplast. The enzyme catalyses alpha-D-glucose 1-phosphate + ATP + H(+) = ADP-alpha-D-glucose + diphosphate. The protein operates within glycan biosynthesis; starch biosynthesis. Activated by 3'phosphoglycerate, inhibited by orthophosphate. Allosteric regulation. Its function is as follows. This protein plays a role in synthesis of starch. It catalyzes the synthesis of the activated glycosyl donor, ADP-glucose from Glc-1-P and ATP. The chain is Glucose-1-phosphate adenylyltransferase large subunit 1, chloroplastic/amyloplastic (SH2) from Zea mays (Maize).